A 206-amino-acid chain; its full sequence is Superoxide dismutase [Mn] (206 aa).

His-27, His-82, Asp-168, and His-172 together coordinate Mn(2+).

This sequence belongs to the iron/manganese superoxide dismutase family. Homodimer. Mn(2+) is required as a cofactor.

The enzyme catalyses 2 superoxide + 2 H(+) = H2O2 + O2. Its function is as follows. Destroys superoxide anion radicals which are normally produced within the cells and which are toxic to biological systems. This is Superoxide dismutase [Mn] (sodA) from Escherichia coli O157:H7.